Here is a 51-residue protein sequence, read N- to C-terminus: Large ribosomal subunit protein eL39 (51 aa).

The protein belongs to the eukaryotic ribosomal protein eL39 family.

This chain is Large ribosomal subunit protein eL39, found in Thermococcus onnurineus (strain NA1).